Here is a 388-residue protein sequence, read N- to C-terminus: MNLHEYQAKALFAEYGLPVSEGFACDTAQEAVEAAGHIGGDMWVVKCQVHAGGRGKAGGVKVTGDKEEIRAFAEHWLGKNLVTYQTDEKGQPVAKILVESCTDIANELYLGAVVDRSTRRVVFMASTEGGVEIETVAEETPELIHKAIIDPLTGPQPYQARDLGFKLGLNPTQMKQFTKVFMGLAKMFEDHDFALLEINPLVITDEGNIHCLDGKIGIDGNALFRQPKIRDMHDPSQDDAREAHAAKFELNYVALDGNVGCMVNGAGLAMGTMDIVNLHGGKPANFLDVGGGATKERVAEAFKIILSDSNVKAVLVNIFGGIVRCDMIAEGIIGAVKEVGVEVPVVVRLEGTNADLGREVLANSDLDIIAATSLTDAAEQVVKAAEGK.

In terms of domain architecture, ATP-grasp spans 9 to 244; it reads KALFAEYGLP…PSQDDAREAH (236 aa). Residues K46, 53–55, E99, T102, and E107 contribute to the ATP site; that span reads GRG. Residues N199 and D213 each coordinate Mg(2+). Substrate-binding positions include N264 and 321–323; that span reads GIV.

Belongs to the succinate/malate CoA ligase beta subunit family. In terms of assembly, heterotetramer of two alpha and two beta subunits. Mg(2+) is required as a cofactor.

It catalyses the reaction succinate + ATP + CoA = succinyl-CoA + ADP + phosphate. The enzyme catalyses GTP + succinate + CoA = succinyl-CoA + GDP + phosphate. It functions in the pathway carbohydrate metabolism; tricarboxylic acid cycle; succinate from succinyl-CoA (ligase route): step 1/1. Succinyl-CoA synthetase functions in the citric acid cycle (TCA), coupling the hydrolysis of succinyl-CoA to the synthesis of either ATP or GTP and thus represents the only step of substrate-level phosphorylation in the TCA. The beta subunit provides nucleotide specificity of the enzyme and binds the substrate succinate, while the binding sites for coenzyme A and phosphate are found in the alpha subunit. This chain is Succinate--CoA ligase [ADP-forming] subunit beta, found in Shewanella pealeana (strain ATCC 700345 / ANG-SQ1).